We begin with the raw amino-acid sequence, 225 residues long: Elongation factor 1-beta (225 aa).

In terms of domain architecture, GST C-terminal spans G2 to S90. The residue at position 7 (K7) is an N6-acetyllysine. 2 positions are modified to phosphoserine: S42 and S83. Residues K73–A115 form a disordered region. T88 is modified (phosphothreonine). Positions K96–E113 are enriched in acidic residues. At S106 the chain carries Phosphoserine. K147 is covalently cross-linked (Glycyl lysine isopeptide (Lys-Gly) (interchain with G-Cter in SUMO2)). Position 174 is a phosphoserine (S174).

This sequence belongs to the EF-1-beta/EF-1-delta family. In terms of assembly, EF-1 is composed of 4 subunits: alpha, beta (alpha subunit of the eEF1B subcomplex), delta (beta subunit of the eEF1B subcomplex), and gamma (gamma subunit of the eEF1B subcomplex). Interacts with elongation factor EEF1A1. Phosphorylation affects the GDP/GTP exchange rate.

Catalytic subunit of the guanine nucleotide exchange factor (GEF) (eEF1B subcomplex) of the eukaryotic elongation factor 1 complex (eEF1). Stimulates the exchange of GDP for GTP on elongation factor 1A (eEF1A), probably by displacing GDP from the nucleotide binding pocket in eEF1A. This is Elongation factor 1-beta (Eef1b) from Mus musculus (Mouse).